The following is a 361-amino-acid chain: Caveolae-associated protein 4 (361 aa).

The segment at 1–21 is disordered; the sequence is MEHNGSASNADKIHQNRLSNV. A coiled-coil region spans residues 100 to 124; the sequence is IKDVKARVEKQQTHVKKVEAKQEEI. 3 positions are modified to phosphoserine: Ser-152, Ser-171, and Ser-172. The stretch at 204-248 forms a coiled coil; it reads ENMQKTRQNFDKKVNRIRTRIVTPERRERLRQSGERLRQSGERLK. Residues 230-255 show a composition bias toward basic and acidic residues; that stretch reads RERLRQSGERLRQSGERLKQSGERFK. Disordered stretches follow at residues 230–283 and 310–346; these read RERL…AVAE and PEAL…FKPQ. Position 335 is a phosphothreonine (Thr-335). Ser-354 carries the post-translational modification Phosphoserine.

It belongs to the CAVIN family. In terms of assembly, component of the CAVIN complex composed of CAVIN1, CAVIN2, CAVIN3 and CAVIN4. Interacts with CAVIN1, ADRA1A, ADRA1B, MAPK1 and MAPK3. Interacts with CAVIN2; this augments the transactivation of NPPA.

It is found in the cytoplasm. The protein localises to the myofibril. It localises to the sarcomere. Its subcellular location is the cytosol. The protein resides in the cell membrane. It is found in the sarcolemma. The protein localises to the membrane. It localises to the caveola. In terms of biological role, modulates the morphology of formed caveolae in cardiomyocytes, but is not required for caveolar formation. Facilitates the recruitment of MAPK1/3 to caveolae within cardiomyocytes and regulates alpha-1 adrenergic receptor-induced hypertrophic responses in cardiomyocytes through MAPK1/3 activation. Contributes to proper membrane localization and stabilization of caveolin-3 (CAV3) in cardiomyocytes. Induces RHOA activation and activates NPPA transcription and myofibrillar organization through the Rho/ROCK signaling pathway. This Bos taurus (Bovine) protein is Caveolae-associated protein 4 (CAVIN4).